We begin with the raw amino-acid sequence, 633 residues long: Pesticidal crystal protein Cry2Ad (633 aa).

This sequence belongs to the delta endotoxin family.

Promotes colloidosmotic lysis by binding to the midgut epithelial cells of insects. In Bacillus thuringiensis, this protein is Pesticidal crystal protein Cry2Ad (cry2Ad).